The chain runs to 311 residues: Progestin and adipoQ receptor family member 3 (311 aa).

The tract at residues 1–20 (MHQKLLKSAHYIELGSYQYW) is required for interaction with SREBF2. Over 1–73 (MHQKLLKSAH…FILSNETVNI (73 aa)) the chain is Cytoplasmic. The interval 41-60 (KDNPYITDGYRAYLPSRLCI) is required for interaction with SCAP. A golgi targeting region spans residues 61–71 (KSLFILSNETV). The helical transmembrane segment at 74–96 (WSHLLGFFLFFTLGIYDMTSVLP) threads the bilayer. At 97-105 (SASASREDF) the chain is on the lumenal side. A helical transmembrane segment spans residues 106-128 (VICSICLFCFQVCMLCSVGYHLF). Residues 129-140 (SCHRSEKTCRRW) are Cytoplasmic-facing. Residues 141-163 (MALDYAGISIGILGCYVSGVFYA) traverse the membrane as a helical segment. The Lumenal segment spans residues 164-172 (FYCNNYWRQ). Residues 173–195 (VYLITVLAMILAVFFAQIHPNYL) traverse the membrane as a helical segment. Residues 196 to 201 (TQQWQR) lie on the Cytoplasmic side of the membrane. A helical transmembrane segment spans residues 202–224 (LRSIIFCSVSGYGVIPTLHWVWL). The Lumenal portion of the chain corresponds to 225-238 (NGGIGAPIVQDFAP). Residues 239-256 (RVIVMYMIALLAFLFYIS) form a helical membrane-spanning segment. At 257–275 (KVPERYFPGQLNYLGSSHQ) the chain is on the cytoplasmic side. Residues 276 to 298 (IWHILAVVMLYWWHQSTVYVMQY) traverse the membrane as a helical segment. The segment at 299–303 (RHSKP) is golgi targeting. Over 299-311 (RHSKPCPDYVSHL) the chain is Lumenal.

Belongs to the ADIPOR family. In terms of assembly, interacts with SCAP and SREBF2; the interactions are direct, increase in low cholesterol conditions and tether SCAP:SREBP complex to the Golgi apparatus. Interaction with SCAP is mutually exclusive with INSIG1. In hepatocytes, interacts with PPARA and HUWE1; the interactions promote PPARA poylubiquitination and HUWE1-mediated degradation. In macrophages, interacts with PPARG and STUB1; the interactions promote PPARG poylubiquitination and STUB1-mediated degradation. Widely expressed in a range of tissues.

Its subcellular location is the golgi apparatus membrane. Golgi-scaffold protein which modulates its interactors acitivies by anchoring them to the Golgi apparatus. Functions as a spatial regulator of RAF1 kinase by sequestrating it to the Golgi apparatus. Acts as a positive regulator of cholesterol biosynthesis by mediating the anchoring of the SCAP:SREBP complex in the Golgi apparatus, thereby promoting SCAP:SREBF2 complex formation, potentiating SREBF2 and SREBF1 processing and enhancing lipid synthesis. Also regulates PPARA and PPARG functions by mediating their interaction with E3 ubiquitin ligases, such as STUB1 or HUWE1, leading to their polyubiquitination and proteasome-mediated degradation. This chain is Progestin and adipoQ receptor family member 3, found in Homo sapiens (Human).